A 469-amino-acid chain; its full sequence is Glutamate--tRNA ligase 1 (469 aa).

The 'HIGH' region signature appears at 11 to 21 (PSPTGHLHLGG). The short motif at 238–242 (KLSKR) is the 'KMSKS' region element. Lys-241 provides a ligand contact to ATP.

Belongs to the class-I aminoacyl-tRNA synthetase family. Glutamate--tRNA ligase type 1 subfamily. In terms of assembly, monomer.

The protein resides in the cytoplasm. The enzyme catalyses tRNA(Glu) + L-glutamate + ATP = L-glutamyl-tRNA(Glu) + AMP + diphosphate. Its function is as follows. Catalyzes the attachment of glutamate to tRNA(Glu) in a two-step reaction: glutamate is first activated by ATP to form Glu-AMP and then transferred to the acceptor end of tRNA(Glu). The protein is Glutamate--tRNA ligase 1 of Ehrlichia canis (strain Jake).